The sequence spans 274 residues: NADPH-dependent 7-cyano-7-deazaguanine reductase (274 aa).

Residue 80–82 participates in substrate binding; it reads VES. Position 82 to 83 (82 to 83) interacts with NADPH; that stretch reads SK. Cysteine 181 (thioimide intermediate) is an active-site residue. Residue aspartate 188 is the Proton donor of the active site. 220–221 lines the substrate pocket; it reads HE. Position 249-250 (249-250) interacts with NADPH; that stretch reads RG.

This sequence belongs to the GTP cyclohydrolase I family. QueF type 2 subfamily. As to quaternary structure, homodimer.

The protein resides in the cytoplasm. It carries out the reaction 7-aminomethyl-7-carbaguanine + 2 NADP(+) = 7-cyano-7-deazaguanine + 2 NADPH + 3 H(+). The protein operates within tRNA modification; tRNA-queuosine biosynthesis. Catalyzes the NADPH-dependent reduction of 7-cyano-7-deazaguanine (preQ0) to 7-aminomethyl-7-deazaguanine (preQ1). This is NADPH-dependent 7-cyano-7-deazaguanine reductase from Burkholderia ambifaria (strain MC40-6).